The sequence spans 109 residues: Spermidine export protein MdtI (109 aa).

The next 4 membrane-spanning stretches (helical) occupy residues 6 to 26 (FYPIAFLILAVMLEIVANILL), 36 to 56 (WLGILSLLSVLGAFSALAQAV), 64 to 84 (AYALWGGFGIAATVAAGWILF), and 88 to 108 (LNYKGWIGLILLLAGMVMIKL).

It belongs to the drug/metabolite transporter (DMT) superfamily. Small multidrug resistance (SMR) (TC 2.A.7.1) family. MdtI subfamily. As to quaternary structure, forms a complex with MdtJ.

It is found in the cell inner membrane. Its function is as follows. Catalyzes the excretion of spermidine. This chain is Spermidine export protein MdtI, found in Yersinia pseudotuberculosis serotype O:1b (strain IP 31758).